A 204-amino-acid chain; its full sequence is MTSPWSACPVQFPQPSISGLSQITKSLFISNGAAANDKLLLSSNQITTVINVSVEVANTFYEDIQYVQVPVVDAPIARLSDFFDPIADHIHSVEMKQGRTLLHCAAGVSRSAALCLAYLMKYHVMSLLDAHAWTKSRRPIIRPNSGFWEQLIHYEFQLFGKNTMQMVNSPMGLIPDIYEKETRMMIPLSTPDGAFHKGKEKALL.

Positions 19-160 constitute a Tyrosine-protein phosphatase domain; it reads GLSQITKSLF…LIHYEFQLFG (142 aa). The tract at residues 95 to 141 is sufficient for mitochondrial localization; the sequence is MKQGRTLLHCAAGVSRSAALCLAYLMKYHVMSLLDAHAWTKSRRPII. Cys104 serves as the catalytic Phosphocysteine intermediate.

Belongs to the protein-tyrosine phosphatase family. Non-receptor class dual specificity subfamily.

The protein resides in the cytoplasm. It is found in the nucleus. The protein localises to the mitochondrion inner membrane. It carries out the reaction O-phospho-L-tyrosyl-[protein] + H2O = L-tyrosyl-[protein] + phosphate. It catalyses the reaction O-phospho-L-seryl-[protein] + H2O = L-seryl-[protein] + phosphate. The enzyme catalyses O-phospho-L-threonyl-[protein] + H2O = L-threonyl-[protein] + phosphate. In terms of biological role, can dephosphorylate single and diphosphorylated synthetic MAPK peptides, with preference for the phosphotyrosine and diphosphorylated forms over phosphothreonine. In vitro, dephosphorylates p-nitrophenyl phosphate (pNPP). This chain is Dual specificity protein phosphatase 18 (Dusp18), found in Rattus norvegicus (Rat).